Here is a 397-residue protein sequence, read N- to C-terminus: tRNA(Ile)-lysidine synthase (397 aa).

ATP is bound at residue 44 to 49; sequence SGGADS.

The protein belongs to the tRNA(Ile)-lysidine synthase family.

It localises to the cytoplasm. The catalysed reaction is cytidine(34) in tRNA(Ile2) + L-lysine + ATP = lysidine(34) in tRNA(Ile2) + AMP + diphosphate + H(+). Ligates lysine onto the cytidine present at position 34 of the AUA codon-specific tRNA(Ile) that contains the anticodon CAU, in an ATP-dependent manner. Cytidine is converted to lysidine, thus changing the amino acid specificity of the tRNA from methionine to isoleucine. In Rhodopirellula baltica (strain DSM 10527 / NCIMB 13988 / SH1), this protein is tRNA(Ile)-lysidine synthase.